The primary structure comprises 285 residues: Energy-coupling factor transporter ATP-binding protein EcfA2 (285 aa).

One can recognise an ABC transporter domain in the interval 3–245; sequence IKIENLNHIY…VETLEKIGLA (243 aa). Residue 40–47 participates in ATP binding; that stretch reads GHTGSGKS.

This sequence belongs to the ABC transporter superfamily. Energy-coupling factor EcfA family. As to quaternary structure, forms a stable energy-coupling factor (ECF) transporter complex composed of 2 membrane-embedded substrate-binding proteins (S component), 2 ATP-binding proteins (A component) and 2 transmembrane proteins (T component).

The protein resides in the cell membrane. ATP-binding (A) component of a common energy-coupling factor (ECF) ABC-transporter complex. Unlike classic ABC transporters this ECF transporter provides the energy necessary to transport a number of different substrates. The chain is Energy-coupling factor transporter ATP-binding protein EcfA2 from Clostridium perfringens (strain 13 / Type A).